Consider the following 350-residue polypeptide: Twinfilin-1 (350 aa).

The residue at position 2 (Ser-2) is an N-acetylserine. Residues 2 to 139 (SHQTGIQASE…SLHGYKKYLL (138 aa)) enclose the ADF-H 1 domain. Residues Ser-143 and Ser-277 each carry the phosphoserine modification. Residues 175-313 (LQGVAFPISR…TADFLYEEVH (139 aa)) enclose the ADF-H 2 domain. Tyr-309 is subject to Phosphotyrosine. Residues 316–350 (QHAHKQSFAKPKGPAGKRGIRRLIRGPAETEATTD) form a disordered region. Thr-349 bears the Phosphothreonine mark.

The protein belongs to the actin-binding proteins ADF family. Twinfilin subfamily. As to quaternary structure, interacts with G-actin; ADP-actin form and capping protein (CP). May also be able to interact with TWF2 and phosphoinositides, PI(4,5)P2. When bound to PI(4,5)P2, it is down-regulated. Interacts with ACTG1. Post-translationally, phosphorylated on serine and threonine residues. Expressed at high levels in the colon, testis, ovary, prostate and lung. Expressed at lower levels in the brain, bladder and heart. Not detected in liver.

It is found in the cytoplasm. The protein localises to the cytoskeleton. In terms of biological role, actin-binding protein involved in motile and morphological processes. Inhibits actin polymerization, likely by sequestering G-actin. By capping the barbed ends of filaments, it also regulates motility. Seems to play an important role in clathrin-mediated endocytosis and distribution of endocytic organelles. The sequence is that of Twinfilin-1 (TWF1) from Homo sapiens (Human).